The following is a 196-amino-acid chain: O-methyltransferase dpmpI (196 aa).

S-adenosyl-L-methionine-binding positions include 127 to 128 (GG), Asp-152, and 174 to 175 (SF). The tract at residues 166 to 196 (NGIEAVPHSFEDPQPIKSKSPRLDNLARERL) is disordered. The span at 186–196 (PRLDNLARERL) shows a compositional bias: basic and acidic residues.

Belongs to the class I-like SAM-binding methyltransferase superfamily. Cation-independent O-methyltransferase family.

Its pathway is secondary metabolite biosynthesis; terpenoid biosynthesis. In terms of biological role, O-methyltransferase; part of the gene cluster that mediates the biosynthesis of diterpenoid pyrones. The first step of the pathway is the synthesis of the alpha-pyrone moiety by the polyketide synthase dpmpA via condensation of one acetyl-CoA starter unit with 3 malonyl-CoA units and 2 methylations. The alpha-pyrone is then combined with geranylgeranyl pyrophosphate (GGPP) formed by the GGPP synthase dpmpD through the action of the prenyltransferase dpmpC to yield a linear alpha-pyrone diterpenoid. Subsequent steps in the diterpenoid pyrone biosynthetic pathway involve the decalin core formation, which is initiated by the epoxidation of the C10-C11 olefin by the FAD-dependent oxidoreductase dpmpE, and is followed by a cyclization cascade catalyzed by the terpene cyclase dpmpB. The short chain dehydrogenase/reductase dpmpG then oxidizes the 8S hydroxy group to a ketone and the short chain dehydrogenase/reductase dpmpH reduces the ketone to the 8R hydroxy group to yield higginsianin B. Higginsianin B is further methylated by the methyltransferase dpmpI to produce the intermediate named FDDP B. The cytochrome P450 monooxygenase dpmpJ then oxidizes the C-26 methyl to primary alcohol, producing the final diterpenoid pyrone with a C-26 primary alcohol on the gamma-pyrone moiety named FDDP C. This chain is O-methyltransferase dpmpI, found in Macrophomina phaseolina (strain MS6) (Charcoal rot fungus).